The primary structure comprises 574 residues: Streptolysin O (574 aa).

The signal sequence occupies residues 1–36 (MKDMSNKKIFKKYSRVAGLLTAALIVGNLVTANADS). Residues 37–52 (NKQNTANTETTTTNEQ) are compositionally biased toward low complexity. Disordered stretches follow at residues 37–64 (NKQN…TTEK) and 84–111 (KEMP…HTEE). Positions 53 to 64 (PKPESSELTTEK) are enriched in basic and acidic residues. 4 beta stranded membrane passes run 263–276 (KSQI…NSKI), 283–292 (IDFKSISKGE), 361–370 (SNDVEAAFSA), and 378–390 (KTNG…LENS). The short motif at 532–542 (ECTGLAWEWWR) is the Conserved undecapeptide element. Residues 564 to 565 (TL) carry the Cholesterol binding motif.

Belongs to the cholesterol-dependent cytolysin family. As to quaternary structure, homooligomeric pore complex of 35 to 50 subunits; when inserted in the host membrane.

The protein resides in the secreted. It localises to the host cell membrane. Its function is as follows. A cholesterol-dependent toxin that causes cytolysis by forming pores in cholesterol containing host membranes. After binding to target membranes, the protein undergoes a major conformation change, leading to its insertion in the host membrane and formation of an oligomeric pore complex. Cholesterol is required for binding to host membranes, membrane insertion and pore formation; cholesterol binding is mediated by a Thr-Leu pair in the C-terminus. Can be reversibly inactivated by oxidation. In Streptococcus dysgalactiae subsp. equisimilis (Streptococcus equisimilis), this protein is Streptolysin O (slo).